Here is a 329-residue protein sequence, read N- to C-terminus: Flotillin-like protein FloA (329 aa).

A helical transmembrane segment spans residues 4–24; the sequence is IWGFLILILVLIFLGVFFSFV.

The protein belongs to the flotillin-like FloA family. In terms of assembly, homooligomerizes.

Its subcellular location is the cell membrane. The protein localises to the membrane raft. Functionally, found in functional membrane microdomains (FMM) that may be equivalent to eukaryotic membrane rafts. FMMs are highly dynamic and increase in number as cells age. Flotillins are thought to be important factors in membrane fluidity. In Dictyoglomus turgidum (strain DSM 6724 / Z-1310), this protein is Flotillin-like protein FloA.